Consider the following 304-residue polypeptide: Olfactory receptor 52A4 (304 aa).

Topologically, residues 1 to 32 (MALPITNGTLFMPFVLTFIGIPGFESVQCWIG) are extracellular. The N-linked (GlcNAc...) asparagine glycan is linked to N7. Residues 33–53 (IPFCATYVIALIGNSLLLIII) form a helical membrane-spanning segment. The Cytoplasmic segment spans residues 54–61 (KSEPSLHE). The helical transmembrane segment at 62-82 (PMYIFLATLGATDISLSTSIV) threads the bilayer. Over 83 to 103 (PKMLDIFWFHLPEIYFDACLF) the chain is Extracellular. C101 and C184 are disulfide-bonded. The helical transmembrane segment at 104-124 (QMWLIHTFQGIESGVLLAMAL) threads the bilayer. Over 125-146 (DRCVAICYPLRRAIVFTRQLVT) the chain is Cytoplasmic. Residues 147 to 167 (YIVVGVTLRPAILVIPCLLLI) traverse the membrane as a helical segment. The Extracellular segment spans residues 168–203 (KCHLKLYRTKLIYHTYCERVALVKLATEDVYINKVY). A helical membrane pass occupies residues 204 to 224 (GILGAFIVGGLDFIFITLSYI). Topologically, residues 225 to 255 (QIFITVFHLPLKEARLKVFNTCIPHIYVFFQ) are cytoplasmic. The chain crosses the membrane as a helical span at residues 256 to 276 (FYLLAFFFIFYSQIWILYPII). The Extracellular portion of the chain corresponds to 277–279 (CTY). Residues 280–300 (HLVQSLPTGPTIPQPLYLWVK) form a helical membrane-spanning segment. Over 301-304 (DQTH) the chain is Cytoplasmic.

The protein belongs to the G-protein coupled receptor 1 family.

The protein localises to the cell membrane. Odorant receptor. This chain is Olfactory receptor 52A4, found in Homo sapiens (Human).